A 185-amino-acid polypeptide reads, in one-letter code: Prenylated Rab acceptor protein 1 (185 aa).

Over 1–78 the chain is Cytoplasmic; that stretch reads MAAEKDQQKD…RNVEYYQSNY (78 aa). Residues 30–54 are required for interaction with prenylated RAB3A and VAMP2; it reads AGRERLERRRATIRPWSSFVDQRRF. 2 consecutive transmembrane segments (helical) span residues 79-94 and 95-112; these read VFVF…VTSP and MLLV…ILYL. At 113-131 the chain is on the cytoplasmic side; the sequence is RTLQSKFVLFGREVSPAHQ. 2 helical membrane-spanning segments follow: residues 132–148 and 149–165; these read YALA…LAGA and GSAV…VIGS. Residues 165-185 are required for interaction with GDI1; it reads SHAAFHQMEAVDGEELQMEPV. The Cytoplasmic portion of the chain corresponds to 166-185; sequence HAAFHQMEAVDGEELQMEPV. The required for interaction with prenylated RAB3A and VAMP2 stretch occupies residues 175–185; the sequence is VDGEELQMEPV. Positions 175–185 are homodimerization; sequence VDGEELQMEPV.

Belongs to the PRA1 family. Homodimer. Interacts with VAMP2 (synaptobrevin-2), prenylated Rab proteins, GDI1, NDRG1 and PCLO.

It is found in the cell membrane. It localises to the cytoplasm. Its subcellular location is the golgi apparatus. The protein resides in the cytoplasmic vesicle. The protein localises to the secretory vesicle. It is found in the synaptic vesicle. Functionally, general Rab protein regulator required for vesicle formation from the Golgi complex. May control vesicle docking and fusion by mediating the action of Rab GTPases to the SNARE complexes. In addition it inhibits the removal of Rab GTPases from the membrane by GDI1. The polypeptide is Prenylated Rab acceptor protein 1 (RABAC1) (Canis lupus familiaris (Dog)).